Reading from the N-terminus, the 86-residue chain is MGLFDFLKAKKTTAETAKNRLQIIIAQERSHRGGPDYLPLLQRELLEVIKKYVNIDVDAVKVDLVKDGQHDVLDISVALPEGPDKP.

It belongs to the MinE family.

In terms of biological role, prevents the cell division inhibition by proteins MinC and MinD at internal division sites while permitting inhibition at polar sites. This ensures cell division at the proper site by restricting the formation of a division septum at the midpoint of the long axis of the cell. The sequence is that of Cell division topological specificity factor from Stenotrophomonas maltophilia (strain K279a).